A 465-amino-acid chain; its full sequence is Clusterin-like protein 1 (465 aa).

A signal peptide spans 1–20 (MKPPILVFIVYLLQLRDCQC). Residues 62-107 (LMERREEEHSKLMRTLKKCREEKQEALKLMNEVQEHLEEEERLCQV) adopt a coiled-coil conformation. 5 disulfide bridges follow: C105-C333, C116-C325, C119-C322, C124-C315, and C131-C305. N-linked (GlcNAc...) asparagine glycans are attached at residues N196 and N257. The segment at 280–300 (LSKQDKDSAHGGPSSTTWPVR) is disordered. N311, N351, N412, and N430 each carry an N-linked (GlcNAc...) asparagine glycan.

The protein belongs to the clusterin family.

Its subcellular location is the secreted. The sequence is that of Clusterin-like protein 1 from Bos taurus (Bovine).